Reading from the N-terminus, the 631-residue chain is RING finger protein 112 (631 aa).

The segment at 57–98 adopts an RING-type zinc-finger fold; sequence CSICLERLRDPISLDCGHDFCIRCFSTHRLPGCEPPCCPECR. Residues 131–631 form an interaction with ZBTB16 region; that stretch reads PVRAEPLLLV…GDREPLLQEE (501 aa). Positions 166–397 constitute a GB1/RHD3-type G domain; the sequence is DTPVCLLAVL…YVSDVLSAAP (232 aa). 318–319 is a GTP binding site; the sequence is RD. The next 2 helical transmembrane spans lie at 547-567 and 580-600; these read LAAVGGAVGAGLMGLAGGVVG and GMVAAGAAVGATGAAVVGGGV.

This sequence belongs to the TRAFAC class dynamin-like GTPase superfamily. GB1/RHD3 GTPase family. GB1 subfamily. In terms of assembly, self-associates. Interacts with SP1 in an oxidative stress-regulated manner. Interacts with SIGMAR1 in an oxidative stress-regulated manner. Interacts with ZBTB16 (via C2H2-type zinc finger domains 1 and 2). Post-translationally, auto-ubiquitinated. Predominantly expressed in brain. Decreased expression in glioma brain tumors as compared to normal brains (at protein level).

The protein resides in the membrane. It is found in the cytoplasm. The protein localises to the nucleus. Its subcellular location is the nuclear body. It localises to the nucleoplasm. The protein resides in the endosome. It is found in the cytoplasmic vesicle. The protein localises to the secretory vesicle. Its subcellular location is the synaptic vesicle. It localises to the postsynaptic density. The protein resides in the perikaryon. It is found in the cell projection. The protein localises to the neuron projection. It catalyses the reaction S-ubiquitinyl-[E2 ubiquitin-conjugating enzyme]-L-cysteine + [acceptor protein]-L-lysine = [E2 ubiquitin-conjugating enzyme]-L-cysteine + N(6)-ubiquitinyl-[acceptor protein]-L-lysine.. Its pathway is protein modification; protein ubiquitination. E3 ubiquitin-protein ligase that plays an important role in neuronal differentiation, including neurogenesis and gliogenesis, during brain development. During embryonic development initiates neuronal differentiation by inducing cell cycle arrest at the G0/G1 phase through up-regulation of cell-cycle regulatory proteins. Plays a role not only in the fetal period during the development of the nervous system, but also in the adult brain, where it is involved in the maintenance of neural functions and protection of the nervous tissue cells from oxidative stress-induced damage. Exhibits GTPase and E3 ubiquitin-protein ligase activities. Regulates dendritic spine density and synaptic neurotransmission; its ability to hydrolyze GTP is involved in the maintenance of dendritic spine density. This chain is RING finger protein 112 (RNF112), found in Homo sapiens (Human).